Here is a 1144-residue protein sequence, read N- to C-terminus: Type II inositol polyphosphate 5-phosphatase 14 (1144 aa).

Disordered stretches follow at residues 15–67 (ASLV…FDSS) and 81–118 (GRTSGERGNGEECGFVTPPSKPASQGGGNDGGREDDIE). WD repeat units follow at residues 158–196 (ETQTGKFLRNIACTESQLWAGQENGVRFWNLEEAYEVGC), 216–255 (VPTSPALCLLVDHGNRLVWTGHKDGKIRAWKMNQPNTTTA), 269–307 (AHRGPVNYIVISSYGDMWSCSDGGVIKIWTLDSLEKSLV), 445–483 (EDTRKVEAIAIAADGSIWTGSMNGVIAQWDGNGSRLREV), and 524–561 (SHNEPVIKLAAGGGFIFSLATHGGVRGWYVTSPGPLDS). 2 catalytic regions span residues 791–807 (DLVAFFGDFNYRLFGIT) and 870–885 (KKRIPAWCDRVIYRDN). Residue Lys-949 forms a Glycyl lysine isopeptide (Lys-Gly) (interchain with G-Cter in ubiquitin) linkage. Positions 1111–1131 (TTMTKNLEGSTRYQTDANRGG) are enriched in polar residues. A disordered region spans residues 1111–1144 (TTMTKNLEGSTRYQTDANRGGSTRHRTDDSTRRG). A compositionally biased stretch (basic and acidic residues) spans 1135–1144 (HRTDDSTRRG).

Belongs to the inositol polyphosphate 5-phosphatase family. It depends on Mg(2+) as a cofactor. In terms of tissue distribution, expressed in young seedlings and flowers.

It catalyses the reaction a 1,2-diacyl-sn-glycero-3-phospho-(1D-myo-inositol-4,5-bisphosphate) + H2O = a 1,2-diacyl-sn-glycero-3-phospho-(1D-myo-inositol 4-phosphate) + phosphate. The catalysed reaction is a 1,2-diacyl-sn-glycero-3-phospho-(1D-myo-inositol-3,4,5-trisphosphate) + H2O = a 1,2-diacyl-sn-glycero-3-phospho-(1D-myo-inositol-3,4-bisphosphate) + phosphate. The enzyme catalyses 1D-myo-inositol 1,4,5-trisphosphate + H2O = 1D-myo-inositol 1,4-bisphosphate + phosphate. Functionally, has phosphatase activity toward PtdIns(4,5)P2, PtdIns(3,4,5)P3 and Ins(1,4,5)P3. This is Type II inositol polyphosphate 5-phosphatase 14 from Arabidopsis thaliana (Mouse-ear cress).